A 464-amino-acid chain; its full sequence is Protein FAM90A1 (464 aa).

5 disordered regions span residues 1-43 (MMAR…PRLK), 71-294 (PNFG…KRSA), 312-386 (PFQI…AASH), 412-437 (PSFHSPEKPGAFLAQSPHVSEKSEGP), and 445-464 (VLYEDLQVPSSSEDSDSDLE). 2 stretches are compositionally biased toward basic and acidic residues: residues 74–83 (GEKEGKENLK) and 97–114 (NKDKGEKEERPRPQDPQR). The span at 180–197 (LASLSPLRKASLSSSSSL) shows a compositional bias: low complexity. Residues 344–355 (TSPQTGTRTPAQ) are compositionally biased toward polar residues.

Belongs to the FAM90 family.

In Homo sapiens (Human), this protein is Protein FAM90A1 (FAM90A1).